We begin with the raw amino-acid sequence, 101 residues long: Enhancer of yellow 2 transcription factor (101 aa).

This sequence belongs to the ENY2 family. As to quaternary structure, component of the nuclear pore complex (NPC)-associated TREX-2/AMEX complex (anchoring and mRNA export complex), composed of e(y)2, xmas and PCID2. Within the TREX-2/ AMEX complex, interactions with xmas is required for localization to the nuclear periphery. Component of the SAGA transcription coactivator-HAT complexes, at least composed of Ada2b, e(y)2, Pcaf/Gcn5, Taf10 and Nipped-A/Trrap. Within the SAGA complex, e(y)2, Sgf11, and not/nonstop form an additional subcomplex of SAGA called the DUB module (deubiquitination module). Component of the THO complex, composed of at least e(y)2, HPR1, THO2, THOC5, THOC6 and THOC7. Interacts with Taf9. Interacts with su(Hw) (via zinc fingers). Interacts with the nuclear pore complex (NPC). Interaction between the TREX-2/AMEX complex and the ORC complex is required for ORC localization to mRNPs, and consequently mRNA export. Within the TREX-2/AMEX-ORC complex, interacts with Orc6 and (via N-terminus or C-terminus) with Orc3. Interacts with the zinc finger protein CG9890. In terms of tissue distribution, ubiquitous.

The protein resides in the nucleus. It is found in the nucleoplasm. Its subcellular location is the cytoplasm. It localises to the nucleus membrane. In terms of biological role, involved in mRNA export coupled transcription activation by association with both the TREX-2/AMEX and the SAGA complexes. The SAGA complex is a multiprotein complex that activates transcription by remodeling chromatin and mediating histone acetylation and deubiquitination. Within the SAGA complex, participates in a subcomplex that specifically deubiquitinates histone H2B. The SAGA complex is recruited to specific gene promoters by activators, where it is required for transcription. Required for nuclear receptor-mediated transactivation. Involved in transcription elongation by recruiting the THO complex onto nascent mRNA. The TREX-2/AMEX complex functions in docking export-competent ribonucleoprotein particles (mRNPs) to the nuclear entrance of the nuclear pore complex (nuclear basket). TREX-2/AMEX participates in mRNA export and accurate chromatin positioning in the nucleus by tethering genes to the nuclear periphery. Recruited to the su(Hw) insulators via its interaction with su(Hw) and participates in the barrier activity of such insulators. In contrast, it does not participate in the enhancer-blocking activity of the su(Hw) insulators. This Drosophila melanogaster (Fruit fly) protein is Enhancer of yellow 2 transcription factor.